The chain runs to 166 residues: Endoribonuclease YbeY (166 aa).

Positions 132, 136, and 142 each coordinate Zn(2+).

This sequence belongs to the endoribonuclease YbeY family. Zn(2+) is required as a cofactor.

It localises to the cytoplasm. Single strand-specific metallo-endoribonuclease involved in late-stage 70S ribosome quality control and in maturation of the 3' terminus of the 16S rRNA. The protein is Endoribonuclease YbeY of Clostridium botulinum (strain 657 / Type Ba4).